Reading from the N-terminus, the 212-residue chain is Small ribosomal subunit protein eS1 (212 aa).

The protein belongs to the eukaryotic ribosomal protein eS1 family.

In Haloquadratum walsbyi (strain DSM 16790 / HBSQ001), this protein is Small ribosomal subunit protein eS1.